Consider the following 628-residue polypeptide: tRNA (guanine(37)-N(1))-methyltransferase (628 aa).

Residues H265, 303–304 (DL), 342–343 (DG), and N445 each bind S-adenosyl-L-methionine.

It belongs to the class I-like SAM-binding methyltransferase superfamily. TRM5/TYW2 family. As to quaternary structure, monomer.

The protein localises to the mitochondrion matrix. The protein resides in the nucleus. Its subcellular location is the cytoplasm. The enzyme catalyses guanosine(37) in tRNA + S-adenosyl-L-methionine = N(1)-methylguanosine(37) in tRNA + S-adenosyl-L-homocysteine + H(+). Functionally, specifically methylates the N1 position of guanosine-37 in various cytoplasmic and mitochondrial tRNAs. Methylation is not dependent on the nature of the nucleoside 5' of the target nucleoside. This is the first step in the biosynthesis of wybutosine (yW), a modified base adjacent to the anticodon of tRNAs and required for accurate decoding. In Mycosarcoma maydis (Corn smut fungus), this protein is tRNA (guanine(37)-N(1))-methyltransferase.